Consider the following 236-residue polypeptide: 2,3,4,5-tetrahydropyridine-2,6-dicarboxylate N-acetyltransferase (236 aa).

Belongs to the transferase hexapeptide repeat family. DapH subfamily.

The catalysed reaction is (S)-2,3,4,5-tetrahydrodipicolinate + acetyl-CoA + H2O = L-2-acetamido-6-oxoheptanedioate + CoA. Its pathway is amino-acid biosynthesis; L-lysine biosynthesis via DAP pathway; LL-2,6-diaminopimelate from (S)-tetrahydrodipicolinate (acetylase route): step 1/3. Catalyzes the transfer of an acetyl group from acetyl-CoA to tetrahydrodipicolinate. The polypeptide is 2,3,4,5-tetrahydropyridine-2,6-dicarboxylate N-acetyltransferase (Listeria innocua serovar 6a (strain ATCC BAA-680 / CLIP 11262)).